Consider the following 525-residue polypeptide: NGFI-A-binding protein 2 (525 aa).

A disordered region spans residues 1–22; the sequence is MHRAPSPTAEQPPGGGDSARRT. A Phosphoserine modification is found at S6. An NCD1 region spans residues 35–113; sequence ALPRTLGELQ…REWATNPGLF (79 aa). Residues 135 to 237 are disordered; the sequence is GTRKGSMSNG…GGTGGGPDRL (103 aa). Residues S157, S159, S162, and S171 each carry the phosphoserine modification. A compositionally biased stretch (gly residues) spans 212 to 234; the sequence is AGGGVPEGTGAGGLAAGGTGGGP. The segment at 267 to 356 is NCD2; that stretch reads LLKLNKKLAR…SRQVARESTY (90 aa). A necessary for nuclear localization region spans residues 353-384; that stretch reads ESTYLSSLKGSRLHPEELGGPPLKKLKQEVGE. K379 is covalently cross-linked (Glycyl lysine isopeptide (Lys-Gly) (interchain with G-Cter in SUMO1)). The interval 380–416 is disordered; sequence QEVGEQSHPEIQQPPPGPESYVPPYRPSLEEDSASLS. Residue S479 is modified to Phosphoserine. The interval 502–525 is disordered; sequence PGPHPALVEGRRSSVKVEAEASRQ. The segment covering 510–525 has biased composition (basic and acidic residues); it reads EGRRSSVKVEAEASRQ. A Glycyl lysine isopeptide (Lys-Gly) (interchain with G-Cter in SUMO1); alternate cross-link involves residue K517. A Glycyl lysine isopeptide (Lys-Gly) (interchain with G-Cter in SUMO2); alternate cross-link involves residue K517.

Belongs to the NAB family. As to quaternary structure, homomultimers may associate with EGR1 bound to DNA. In terms of processing, sumoylation by EGR2 represses EGR2 transcriptional activity in hindbrain. In terms of tissue distribution, widely expressed at low levels. Highly expressed in melanoma cell lines.

The protein resides in the nucleus. Its function is as follows. Acts as a transcriptional repressor for zinc finger transcription factors EGR1 and EGR2. Isoform 2 lacks repression ability. This chain is NGFI-A-binding protein 2 (NAB2), found in Homo sapiens (Human).